A 115-amino-acid polypeptide reads, in one-letter code: Immunoglobulin kappa variable 5-48 (115 aa).

Residues 1 to 20 (MVSTPQFLVFLLFWIPASRG) form the signal peptide. Positions 21–43 (DILLTQSPAILSVSPGERVSFSC) are framework-1. A disulfide bridge connects residues Cys43 and Cys108. Positions 44–54 (RASQSIGTSIH) are complementarity-determining-1. A framework-2 region spans residues 55-69 (WYQQRTNGSPRLLIK). The complementarity-determining-2 stretch occupies residues 70 to 76 (YASESIS). The framework-3 stretch occupies residues 77 to 108 (GIPSRFSGSGSGTDFTLSINSVESEDIADYYC). Residues 109 to 115 (QQSNSWP) are complementarity-determining-3.

The protein is Immunoglobulin kappa variable 5-48 of Mus musculus (Mouse).